The primary structure comprises 491 residues: Ketol-acid reductoisomerase (NADP(+)) (491 aa).

The KARI N-terminal Rossmann domain maps to 14-208 (LKHLGKCRFM…GSHRAGVLES (195 aa)). NADP(+) contacts are provided by residues 45–48 (CGSQ), Arg-68, and Ser-78. Residue His-132 is part of the active site. Gly-158 contacts NADP(+). 2 consecutive KARI C-terminal knotted domains span residues 209-344 (SFVA…QAPN) and 345-485 (YQQE…MQNM). Asp-217, Glu-221, Glu-389, and Glu-393 together coordinate Mg(2+). Ser-414 lines the substrate pocket.

This sequence belongs to the ketol-acid reductoisomerase family. The cofactor is Mg(2+).

It catalyses the reaction (2R)-2,3-dihydroxy-3-methylbutanoate + NADP(+) = (2S)-2-acetolactate + NADPH + H(+). The enzyme catalyses (2R,3R)-2,3-dihydroxy-3-methylpentanoate + NADP(+) = (S)-2-ethyl-2-hydroxy-3-oxobutanoate + NADPH + H(+). The protein operates within amino-acid biosynthesis; L-isoleucine biosynthesis; L-isoleucine from 2-oxobutanoate: step 2/4. It participates in amino-acid biosynthesis; L-valine biosynthesis; L-valine from pyruvate: step 2/4. In terms of biological role, involved in the biosynthesis of branched-chain amino acids (BCAA). Catalyzes an alkyl-migration followed by a ketol-acid reduction of (S)-2-acetolactate (S2AL) to yield (R)-2,3-dihydroxy-isovalerate. In the isomerase reaction, S2AL is rearranged via a Mg-dependent methyl migration to produce 3-hydroxy-3-methyl-2-ketobutyrate (HMKB). In the reductase reaction, this 2-ketoacid undergoes a metal-dependent reduction by NADPH to yield (R)-2,3-dihydroxy-isovalerate. In Blochmanniella pennsylvanica (strain BPEN), this protein is Ketol-acid reductoisomerase (NADP(+)).